The chain runs to 640 residues: ETV5-related protein Ets96B (640 aa).

The segment at 315 to 375 (HADSTTTAAQ…HHGHQQAEQQ (61 aa)) is disordered. A coiled-coil region spans residues 321-356 (TAAQQQQQQQEQQQQQQQQQQQQQHQQQLQQAAALH). Residues 322-355 (AAQQQQQQQEQQQQQQQQQQQQQHQQQLQQAAAL) show a composition bias toward low complexity. Residues 356–369 (HPHHHHSHHGHHGH) are compositionally biased toward basic residues. The ETS DNA-binding region spans 498 to 579 (LQLWQFLVAL…NGERYVYRFV (82 aa)). Residues 609 to 624 (LAKTPPTSGDSQTQSP) are compositionally biased toward polar residues. Positions 609 to 628 (LAKTPPTSGDSQTQSPRVAK) are disordered.

The protein belongs to the ETS family. In terms of tissue distribution, in the adult brain, expressed almost exclusively in dopaminergic neurons.

The protein resides in the nucleus. In terms of biological role, required in dopaminergic neurons to regulate expression of genes involved in dopamine signaling. Decreases expression of the dopamine transporter DAT and increases expression of the dopamine transporter Vmat and the tyrosine 3-monooxygenase ple which is involved in dopamine biosynthesis. Also involved in negatively regulating the expression of a group of endoplasmic reticulum proteins, the molecular chaperone Calr and the protein disulfide isomerases CaBP1 and ERp60. This is ETV5-related protein Ets96B from Drosophila melanogaster (Fruit fly).